Consider the following 218-residue polypeptide: MNKISPEAEKVRNALLSKGIETPMITPEQDRDTRRAGIEQHMREVMKLIGLDLRDDSLEETPVRLAKMFVDEIFSGLDYANFPKITNIENRMKVSEMVLVNDVTLTSTCEHHFVTIDGMVSVAYYPKKWVIGLSKINRIVAFFAQRPQVQERLTEQILLAFQTILETDDVAVYVKATHFCVKCRGIKDTNSYTVTSAFGGVFLDDRETRKEFLTLINK.

Zn(2+) is bound by residues C109, H112, and C180.

The protein belongs to the GTP cyclohydrolase I family. In terms of assembly, toroid-shaped homodecamer, composed of two pentamers of five dimers.

It carries out the reaction GTP + H2O = 7,8-dihydroneopterin 3'-triphosphate + formate + H(+). The protein operates within cofactor biosynthesis; 7,8-dihydroneopterin triphosphate biosynthesis; 7,8-dihydroneopterin triphosphate from GTP: step 1/1. The protein is GTP cyclohydrolase 1 (folE) of Pasteurella multocida (strain Pm70).